Reading from the N-terminus, the 155-residue chain is Vasotocin-neurophysin VT 2 (155 aa).

An N-terminal signal peptide occupies residues 1 to 20 (MSVCAVLLLCVAGLLCLSSA). The cysteines at positions 21 and 26 are disulfide-linked. The residue at position 29 (G29) is a Glycine amide. Cystine bridges form between C42–C86, C45–C59, C53–C76, C60–C66, C93–C106, C100–C118, and C107–C112. The segment covering 119–128 (SEDSESEEPA) has biased composition (acidic residues). A disordered region spans residues 119–139 (SEDSESEEPADQNTLGASPGE).

This sequence belongs to the vasopressin/oxytocin family.

It is found in the secreted. Vasotocin is an antidiuretic hormone. This Catostomus commersonii (White sucker) protein is Vasotocin-neurophysin VT 2.